The primary structure comprises 177 residues: Transcription termination/antitermination protein NusG (177 aa).

Residues 125-150 form the KOW domain; the sequence is EGENVRITEGPFANFTAIVEEYDMVR.

It belongs to the NusG family.

In terms of biological role, participates in transcription elongation, termination and antitermination. This Campylobacter jejuni subsp. jejuni serotype O:2 (strain ATCC 700819 / NCTC 11168) protein is Transcription termination/antitermination protein NusG.